A 260-amino-acid polypeptide reads, in one-letter code: Hydroxyacylglutathione hydrolase (260 aa).

Positions 66, 68, 70, 71, 125, 150, and 188 each coordinate Zn(2+).

This sequence belongs to the metallo-beta-lactamase superfamily. Glyoxalase II family. Monomer. Zn(2+) serves as cofactor.

The enzyme catalyses an S-(2-hydroxyacyl)glutathione + H2O = a 2-hydroxy carboxylate + glutathione + H(+). The protein operates within secondary metabolite metabolism; methylglyoxal degradation; (R)-lactate from methylglyoxal: step 2/2. Thiolesterase that catalyzes the hydrolysis of S-D-lactoyl-glutathione to form glutathione and D-lactic acid. The chain is Hydroxyacylglutathione hydrolase from Prochlorococcus marinus (strain MIT 9303).